A 193-amino-acid polypeptide reads, in one-letter code: Peptide deformylase (193 aa).

The Fe cation site is built by C111 and H155. E156 is an active-site residue. H159 lines the Fe cation pocket.

It belongs to the polypeptide deformylase family. Requires Fe(2+) as cofactor.

It catalyses the reaction N-terminal N-formyl-L-methionyl-[peptide] + H2O = N-terminal L-methionyl-[peptide] + formate. Functionally, removes the formyl group from the N-terminal Met of newly synthesized proteins. Requires at least a dipeptide for an efficient rate of reaction. N-terminal L-methionine is a prerequisite for activity but the enzyme has broad specificity at other positions. The protein is Peptide deformylase of Mycoplasma genitalium (strain ATCC 33530 / DSM 19775 / NCTC 10195 / G37) (Mycoplasmoides genitalium).